The following is a 359-amino-acid chain: Protein mab-21-like 2-A (359 aa).

This sequence belongs to the mab-21 family.

It is found in the nucleus. The protein resides in the cytoplasm. Required for normal development of the eye. May promote dorsalization of the developing embryo by antagonizing the ventralizing factor bmp4. Functional antagonism of bmp4 may require interaction with smad1. Required for gastrulation and subsequent neural development. May function as a transcriptional repressor. The sequence is that of Protein mab-21-like 2-A (mab21l2-a) from Xenopus laevis (African clawed frog).